Here is a 389-residue protein sequence, read N- to C-terminus: Chaperone protein DnaJ (389 aa).

One can recognise a J domain in the interval 5-79; that stretch reads KRDYYEVLGI…RKLYDQFGHE (75 aa). The CR-type zinc finger occupies 151 to 234; it reads GCNKTIKYER…CRSNKYTVTN (84 aa). Zn(2+) is bound by residues Cys164, Cys167, Cys182, Cys185, Cys208, Cys211, Cys222, and Cys225. 4 CXXCXGXG motif repeats span residues 164–171, 182–189, 208–215, and 222–229; these read CHSCNGFG, CKDCNGNG, CSTCNGQG, and CKTCRSNK.

It belongs to the DnaJ family. As to quaternary structure, homodimer. Requires Zn(2+) as cofactor.

It localises to the cytoplasm. Functionally, participates actively in the response to hyperosmotic and heat shock by preventing the aggregation of stress-denatured proteins and by disaggregating proteins, also in an autonomous, DnaK-independent fashion. Unfolded proteins bind initially to DnaJ; upon interaction with the DnaJ-bound protein, DnaK hydrolyzes its bound ATP, resulting in the formation of a stable complex. GrpE releases ADP from DnaK; ATP binding to DnaK triggers the release of the substrate protein, thus completing the reaction cycle. Several rounds of ATP-dependent interactions between DnaJ, DnaK and GrpE are required for fully efficient folding. Also involved, together with DnaK and GrpE, in the DNA replication of plasmids through activation of initiation proteins. This chain is Chaperone protein DnaJ, found in Mycoplasma genitalium (strain ATCC 33530 / DSM 19775 / NCTC 10195 / G37) (Mycoplasmoides genitalium).